The primary structure comprises 338 residues: MKVFYDKDCDLSIIQGKKVAIIGYGSQGHAQACNLKDSGVDVTVGLRKGSATVAKAEAHGLKVADVATAVAAADLVMILTPDEFQGALYKNEIEPNIKKGATLAFSHGFSIHYNQVVPRADLDVIMIAPKAPGHTVRSEFVKGGGIPDLIAIYQDASGNAKNVALSYASGVGGGRTGIIETTFKDETETDLFGEQAVLCGGTVELVKAGFETLVEAGYAPEMAYFECLHELKLIVDLMYEGGIANMNYSISNNAEYGEYVTGPEVINEESRKAMRNALKRIQDGEYAKMFISEGATNYPSMTAKRRNNAAHGIEVIGEQLRSMMPWISANKIVDKTKN.

The KARI N-terminal Rossmann domain occupies 1-181; sequence MKVFYDKDCD…GGGRTGIIET (181 aa). NADP(+) contacts are provided by residues 24 to 27, Arg47, Ser50, Thr52, and 82 to 85; these read YGSQ and DEFQ. Residue His107 is part of the active site. Gly133 contributes to the NADP(+) binding site. The 146-residue stretch at 182-327 folds into the KARI C-terminal knotted domain; it reads TFKDETETDL…EQLRSMMPWI (146 aa). Asp190, Glu194, Glu226, and Glu230 together coordinate Mg(2+). Ser251 serves as a coordination point for substrate.

Belongs to the ketol-acid reductoisomerase family. Mg(2+) is required as a cofactor.

It carries out the reaction (2R)-2,3-dihydroxy-3-methylbutanoate + NADP(+) = (2S)-2-acetolactate + NADPH + H(+). The catalysed reaction is (2R,3R)-2,3-dihydroxy-3-methylpentanoate + NADP(+) = (S)-2-ethyl-2-hydroxy-3-oxobutanoate + NADPH + H(+). It participates in amino-acid biosynthesis; L-isoleucine biosynthesis; L-isoleucine from 2-oxobutanoate: step 2/4. Its pathway is amino-acid biosynthesis; L-valine biosynthesis; L-valine from pyruvate: step 2/4. Involved in the biosynthesis of branched-chain amino acids (BCAA). Catalyzes an alkyl-migration followed by a ketol-acid reduction of (S)-2-acetolactate (S2AL) to yield (R)-2,3-dihydroxy-isovalerate. In the isomerase reaction, S2AL is rearranged via a Mg-dependent methyl migration to produce 3-hydroxy-3-methyl-2-ketobutyrate (HMKB). In the reductase reaction, this 2-ketoacid undergoes a metal-dependent reduction by NADPH to yield (R)-2,3-dihydroxy-isovalerate. This chain is Ketol-acid reductoisomerase (NADP(+)), found in Pseudomonas putida (strain W619).